The chain runs to 148 residues: D-aminoacyl-tRNA deacylase (148 aa).

Positions glycine 137–proline 138 match the Gly-cisPro motif, important for rejection of L-amino acids motif.

Belongs to the DTD family. Homodimer.

The protein localises to the cytoplasm. It carries out the reaction glycyl-tRNA(Ala) + H2O = tRNA(Ala) + glycine + H(+). It catalyses the reaction a D-aminoacyl-tRNA + H2O = a tRNA + a D-alpha-amino acid + H(+). In terms of biological role, an aminoacyl-tRNA editing enzyme that deacylates mischarged D-aminoacyl-tRNAs. Also deacylates mischarged glycyl-tRNA(Ala), protecting cells against glycine mischarging by AlaRS. Acts via tRNA-based rather than protein-based catalysis; rejects L-amino acids rather than detecting D-amino acids in the active site. By recycling D-aminoacyl-tRNA to D-amino acids and free tRNA molecules, this enzyme counteracts the toxicity associated with the formation of D-aminoacyl-tRNA entities in vivo and helps enforce protein L-homochirality. The chain is D-aminoacyl-tRNA deacylase from Oenococcus oeni (strain ATCC BAA-331 / PSU-1).